Consider the following 218-residue polypeptide: Thiopurine S-methyltransferase (218 aa).

Residues W10, L45, E66, and R123 each contribute to the S-adenosyl-L-methionine site.

This sequence belongs to the class I-like SAM-binding methyltransferase superfamily. TPMT family.

The protein localises to the cytoplasm. It carries out the reaction S-adenosyl-L-methionine + a thiopurine = S-adenosyl-L-homocysteine + a thiopurine S-methylether.. The protein is Thiopurine S-methyltransferase of Shewanella loihica (strain ATCC BAA-1088 / PV-4).